The sequence spans 147 residues: UPF0047 protein sll1880 (147 aa).

Belongs to the UPF0047 family.

In Synechocystis sp. (strain ATCC 27184 / PCC 6803 / Kazusa), this protein is UPF0047 protein sll1880.